Reading from the N-terminus, the 23-residue chain is Chaperonin GroEL (23 aa).

The protein belongs to the chaperonin (HSP60) family. Forms a cylinder of 14 subunits composed of two heptameric rings stacked back-to-back. Interacts with the co-chaperonin GroES. Post-translationally, phosphorylated on threonine.

Its subcellular location is the cytoplasm. The enzyme catalyses ATP + H2O + a folded polypeptide = ADP + phosphate + an unfolded polypeptide.. In terms of biological role, together with its co-chaperonin GroES, plays an essential role in assisting protein folding. The GroEL-GroES system forms a nano-cage that allows encapsulation of the non-native substrate proteins and provides a physical environment optimized to promote and accelerate protein folding. The chain is Chaperonin GroEL from Acidithiobacillus ferrooxidans (Thiobacillus ferrooxidans).